The primary structure comprises 219 residues: MHRQSVVRLSRQLGAFPLVELPPPYLAPSLHFPLNRSSVQTSNFSSTAPAAGHGKDLNKSRAVSAIHRTGPRFKLGASKYPLPKPVSPEKLEKRESTPDHGLWGFFPKDRSALSTPEYDNAHGRSWSIQELREKSWEDLHSLWWVCLKEKNRIATSNLERKRLKAGYGEWEANQRLRTIRVTQLNIKHVLRERWYAWEDAQNLYKKGYRPQNEDTEESA.

Residues 77–97 (ASKYPLPKPVSPEKLEKREST) form a disordered region. Residues 87-97 (SPEKLEKREST) are compositionally biased toward basic and acidic residues.

Belongs to the universal ribosomal protein uL29 family. In terms of assembly, component of the mitochondrial large ribosomal subunit. Mature mitochondrial ribosomes consist of a small (37S) and a large (54S) subunit. The 37S subunit contains at least 33 different proteins and 1 molecule of RNA (15S). The 54S subunit contains at least 45 different proteins and 1 molecule of RNA (21S).

It is found in the mitochondrion. This Emericella nidulans (strain FGSC A4 / ATCC 38163 / CBS 112.46 / NRRL 194 / M139) (Aspergillus nidulans) protein is Large ribosomal subunit protein uL29m (mrpl4).